A 162-amino-acid polypeptide reads, in one-letter code: Cyclic pyranopterin monophosphate synthase (162 aa).

Substrate is bound by residues Leu-79–His-81 and Met-117–Glu-118. Asp-132 is a catalytic residue.

Belongs to the MoaC family. As to quaternary structure, homohexamer; trimer of dimers.

The catalysed reaction is (8S)-3',8-cyclo-7,8-dihydroguanosine 5'-triphosphate = cyclic pyranopterin phosphate + diphosphate. It participates in cofactor biosynthesis; molybdopterin biosynthesis. Catalyzes the conversion of (8S)-3',8-cyclo-7,8-dihydroguanosine 5'-triphosphate to cyclic pyranopterin monophosphate (cPMP). This chain is Cyclic pyranopterin monophosphate synthase, found in Bordetella avium (strain 197N).